We begin with the raw amino-acid sequence, 187 residues long: Large ribosomal subunit protein bL9 (187 aa).

Residues 155-187 (AQRGGMVTGLREEDEEEEVEETATEEGGEETAA) are disordered. Residues 166–187 (EEDEEEEVEETATEEGGEETAA) are compositionally biased toward acidic residues.

Belongs to the bacterial ribosomal protein bL9 family.

In terms of biological role, binds to the 23S rRNA. This Rhodospirillum centenum (strain ATCC 51521 / SW) protein is Large ribosomal subunit protein bL9.